Here is a 339-residue protein sequence, read N- to C-terminus: Heat stress transcription factor C-1a (339 aa).

Residues 154-217 (EEEDAAEDVL…LAKLADDPNA (64 aa)) adopt a coiled-coil conformation. The tract at residues 176–212 (LRHEQTAIGEELARMSQRLQATERRPDQLMSFLAKLA) is hydrophobic repeat HR-A/B. A disordered region spans residues 227–248 (AERKRRRQHLPSHEPTVCPLPP). The Nuclear localization signal motif lies at 229 to 233 (RKRRR).

Belongs to the HSF family. Class C subfamily. Homotrimer. Exhibits temperature-dependent phosphorylation.

The protein resides in the nucleus. Functionally, transcriptional regulator that specifically binds DNA of heat shock promoter elements (HSE). This Oryza sativa subsp. japonica (Rice) protein is Heat stress transcription factor C-1a (HSFC1A).